The primary structure comprises 240 residues: Uridylate kinase (240 aa).

Residue 13 to 16 (KFSG) coordinates ATP. G55 provides a ligand contact to UMP. ATP is bound by residues G56 and R60. Residues D76 and 137–144 (TGNPFFTT) each bind UMP. ATP is bound by residues T164, Y170, and D173.

Belongs to the UMP kinase family. In terms of assembly, homohexamer.

It localises to the cytoplasm. It catalyses the reaction UMP + ATP = UDP + ADP. The protein operates within pyrimidine metabolism; CTP biosynthesis via de novo pathway; UDP from UMP (UMPK route): step 1/1. Inhibited by UTP. Functionally, catalyzes the reversible phosphorylation of UMP to UDP. This chain is Uridylate kinase, found in Helicobacter pylori (strain ATCC 700392 / 26695) (Campylobacter pylori).